Here is a 563-residue protein sequence, read N- to C-terminus: Lengsin (563 aa).

Residues 1–115 are disordered; the sequence is MTDEGDLAQE…PNTDPTRYNA (115 aa). A compositionally biased stretch (basic residues) spans 26 to 37; sequence SKLRRARRKVTK. Composition is skewed to polar residues over residues 51-62 and 105-115; these read ANSSEMSRNQIA and SPNTDPTRYNA. The 95-residue stretch at 137–231 folds into the GS beta-grasp domain; the sequence is NHLQFVRFEA…VICDTFTVTG (95 aa). In terms of domain architecture, GS catalytic spans 238–563; it reads PRYIAKRQLR…EGNKFLEYFI (326 aa).

This sequence belongs to the glutamine synthetase family. Dodecamer. Interacts with BFSP2 and VIM. In terms of tissue distribution, expressed in lens.

Functionally, may act as a component of the cytoskeleton or as a chaperone for the reorganization of intermediate filament proteins during terminal differentiation in the lens. Does not seem to have enzymatic activity. The protein is Lengsin (Lgsn) of Mus musculus (Mouse).